The primary structure comprises 442 residues: TTTVVNYTAKKSYCRRAVELTLGSLGVSSELQQKLQDVVIDRNALSLGKVLGEGEFGSVMEGRLSQPEGTPQKVAVKTMKLDNFSHREIEEFLSEAACIKDFDHPNVIKLLGVCIELSSQQIPKPMVVLPFMKYGDLHSFLLRSRLEMAPQFVPLQMLLKFMVDIALGMEYLSSRQFLHRDLAARNCMLRDDMTVCVADFGLSKKIYSGDYYRQGRIAKMPVKWIAIESLADRVYTTKSDVWAFGVTMWEIATRGMTPYPGVQNHEIYEYLFHGQRLKKPENCLDELYDIMSSCWRAEPADRPTFSQLKVHLEKLLESLPAPRGSKDVIYVNTSLPEESPDSTQDLGLDSVIPQADSDLDPGDIAEPCCSHTKAALVAVDIHDGGSRYVLESEGSPTEDAYVPQLPHEGSAWTEASTLPVGSSLAAQLPCADGCLEDSEALL.

The region spanning 45 to 316 (LSLGKVLGEG…QLKVHLEKLL (272 aa)) is the Protein kinase domain. ATP is bound by residues 51 to 59 (LGEGEFGSV) and Lys-77. Residue Asp-181 is the Proton acceptor of the active site. Tyr-212 bears the Phosphotyrosine; by autocatalysis mark.

Belongs to the protein kinase superfamily. Tyr protein kinase family. AXL/UFO subfamily.

It is found in the host cell membrane. The enzyme catalyses L-tyrosyl-[protein] + ATP = O-phospho-L-tyrosyl-[protein] + ADP + H(+). The sequence is that of Tyrosine-protein kinase transforming protein RYK (V-RYK) from Avian retrovirus RPL30.